An 83-amino-acid chain; its full sequence is Transmembrane protein EP84R (83 aa).

Transmembrane regions (helical) follow at residues 31-51 (IIGVILLVICLLFILIGIIIL) and 59-79 (AGSIFVVLSLILGGGGFFLIY).

It belongs to the asfivirus EP84R family.

It is found in the virion membrane. This Ornithodoros (relapsing fever ticks) protein is Transmembrane protein EP84R.